The following is a 488-amino-acid chain: Homoserine O-acetyltransferase (488 aa).

The AB hydrolase-1 domain occupies 47–355 (NAILVCHALT…SYGHDAFLLE (309 aa)). S153 serves as the catalytic Nucleophile. R222 is a binding site for substrate. Active-site residues include D316 and H349. Residue D350 coordinates substrate. CBS domains are found at residues 376 to 433 (MTEK…CSKL) and 437 to 488 (MTRD…RLIG).

It belongs to the AB hydrolase superfamily. MetX family. As to quaternary structure, homodimer.

The protein resides in the cytoplasm. The enzyme catalyses L-homoserine + acetyl-CoA = O-acetyl-L-homoserine + CoA. Its pathway is amino-acid biosynthesis; L-methionine biosynthesis via de novo pathway; O-acetyl-L-homoserine from L-homoserine: step 1/1. Its function is as follows. Transfers an acetyl group from acetyl-CoA to L-homoserine, forming acetyl-L-homoserine. The sequence is that of Homoserine O-acetyltransferase from Methanococcoides burtonii (strain DSM 6242 / NBRC 107633 / OCM 468 / ACE-M).